Consider the following 876-residue polypeptide: Senescence-induced receptor-like serine/threonine-protein kinase (876 aa).

The first 24 residues, 1 to 24, serve as a signal peptide directing secretion; that stretch reads MAMLKSLSSILFTSFALLFFLVHA. Over 25 to 517 the chain is Extracellular; sequence QDQSGFISID…SNTKKKNKNG (493 aa). LRR repeat units lie at residues 415–438, 439–462, and 463–483; these read RVVS…SNLT, SIRK…ANLP, and NLTE…QRLH. The chain crosses the membrane as a helical span at residues 518–538; it reads YIIPLVVVGIIVVLLTALALF. Residues 539–876 are Cytoplasmic-facing; the sequence is RRFKKKQQRG…LDTEMVPRAR (338 aa). Residues 574–847 enclose the Protein kinase domain; that stretch reads NNFERVIGKG…VVMELKQIVY (274 aa). ATP-binding positions include 580-588 and lysine 601; that span reads IGKGGFGKV. Tyrosine 646 carries the post-translational modification Phosphotyrosine. Aspartate 697 serves as the catalytic Proton acceptor. Residue serine 731 is modified to Phosphoserine. Position 732 is a phosphothreonine (threonine 732). Tyrosine 745 is modified (phosphotyrosine).

It belongs to the protein kinase superfamily. Ser/Thr protein kinase family.

The protein resides in the membrane. Involved in innate immune response of plants. This chain is Senescence-induced receptor-like serine/threonine-protein kinase (SIRK), found in Arabidopsis thaliana (Mouse-ear cress).